The chain runs to 97 residues: Cobalt transport protein CbiN (97 aa).

2 helical membrane passes run 6-26 (VLMI…YSGL) and 68-88 (SLLF…FFGY).

The protein belongs to the CbiN family. In terms of assembly, forms an energy-coupling factor (ECF) transporter complex composed of an ATP-binding protein (A component, CbiO), a transmembrane protein (T component, CbiQ) and 2 possible substrate-capture proteins (S components, CbiM and CbiN) of unknown stoichimetry.

It localises to the cell membrane. It functions in the pathway cofactor biosynthesis; adenosylcobalamin biosynthesis. Its function is as follows. Part of the energy-coupling factor (ECF) transporter complex CbiMNOQ involved in cobalt import. This is Cobalt transport protein CbiN from Methanococcus maripaludis (strain C7 / ATCC BAA-1331).